We begin with the raw amino-acid sequence, 455 residues long: Argininosuccinate lyase (455 aa).

This sequence belongs to the lyase 1 family. Argininosuccinate lyase subfamily.

The protein localises to the cytoplasm. The catalysed reaction is 2-(N(omega)-L-arginino)succinate = fumarate + L-arginine. Its pathway is amino-acid biosynthesis; L-arginine biosynthesis; L-arginine from L-ornithine and carbamoyl phosphate: step 3/3. The polypeptide is Argininosuccinate lyase (Shewanella denitrificans (strain OS217 / ATCC BAA-1090 / DSM 15013)).